We begin with the raw amino-acid sequence, 102 residues long: Citrate lyase acyl carrier protein (102 aa).

An O-(phosphoribosyl dephospho-coenzyme A)serine modification is found at Ser14.

Belongs to the CitD family. Oligomer with a subunit composition of (alpha,beta,gamma)6.

The protein localises to the cytoplasm. Its function is as follows. Covalent carrier of the coenzyme of citrate lyase. In Streptococcus pyogenes serotype M2 (strain MGAS10270), this protein is Citrate lyase acyl carrier protein.